The following is a 219-amino-acid chain: Flagellar L-ring protein (219 aa).

The N-terminal stretch at 1–14 (MKRLVLISLVLAAG) is a signal peptide. C15 carries N-palmitoyl cysteine lipidation. C15 carries S-diacylglycerol cysteine lipidation.

The protein belongs to the FlgH family. The basal body constitutes a major portion of the flagellar organelle and consists of four rings (L,P,S, and M) mounted on a central rod.

Its subcellular location is the cell outer membrane. It is found in the bacterial flagellum basal body. Its function is as follows. Assembles around the rod to form the L-ring and probably protects the motor/basal body from shearing forces during rotation. In Dechloromonas aromatica (strain RCB), this protein is Flagellar L-ring protein.